The following is a 158-amino-acid chain: MIPGEYILSSESLTGNVGREAKTIEIINTGDRPVQIGSHFHFAEVNPSISFDRSEGYGFRLDIPSGTAVRLEPGDARTVNLVAIGGDRIVAGFRDLVDGPLEDLKVNVWEGREDDWRRSSAAGDAPQELPQVEAAERGRKLDEATDVGTEDTPEEGQN.

Residues 113-158 (EDDWRRSSAAGDAPQELPQVEAAERGRKLDEATDVGTEDTPEEGQN) are disordered. Residues 134 to 143 (AAERGRKLDE) are compositionally biased toward basic and acidic residues. Acidic residues predominate over residues 144–158 (ATDVGTEDTPEEGQN).

It belongs to the urease beta subunit family. Heterotrimer of UreA (gamma), UreB (beta) and UreC (alpha) subunits. Three heterotrimers associate to form the active enzyme.

It is found in the cytoplasm. The enzyme catalyses urea + 2 H2O + H(+) = hydrogencarbonate + 2 NH4(+). It participates in nitrogen metabolism; urea degradation; CO(2) and NH(3) from urea (urease route): step 1/1. This chain is Urease subunit beta, found in Corynebacterium glutamicum (strain R).